Reading from the N-terminus, the 103-residue chain is Cell division protein CrgA (103 aa).

2 helical membrane passes run 49 to 69 and 80 to 100; these read FVPLFCALMIIGLIWCVVYYL and IGAWNLGIGFALIMIGFLMTM.

This sequence belongs to the CrgA family.

The protein localises to the cell membrane. Functionally, involved in cell division. This Bifidobacterium longum (strain NCC 2705) protein is Cell division protein CrgA.